Consider the following 143-residue polypeptide: Large ribosomal subunit protein uL13 (143 aa).

Belongs to the universal ribosomal protein uL13 family. In terms of assembly, part of the 50S ribosomal subunit.

This protein is one of the early assembly proteins of the 50S ribosomal subunit, although it is not seen to bind rRNA by itself. It is important during the early stages of 50S assembly. This Symbiobacterium thermophilum (strain DSM 24528 / JCM 14929 / IAM 14863 / T) protein is Large ribosomal subunit protein uL13.